Consider the following 211-residue polypeptide: MAKLKVNPTRMALSELKKRLVTARRGHKLLKDKQDELMRQFINLIKENKKLRVEVEKELSDSFKSFLLASATMSPLFLESAISFPKEKIAVEMKLKNIMSVNVPEMKFVKEEMEGSIFPYGFVQTSAELDDTVIKLQKVLDNLLSLAEIEKSCQLMADEIEKTRRRVNALEYSTIPNLEETVKDIRMKLDENERATITRLMKVKQMLQKDA.

The protein belongs to the V-ATPase D subunit family.

Functionally, produces ATP from ADP in the presence of a proton gradient across the membrane. The chain is V-type ATP synthase subunit D from Fusobacterium nucleatum subsp. nucleatum (strain ATCC 25586 / DSM 15643 / BCRC 10681 / CIP 101130 / JCM 8532 / KCTC 2640 / LMG 13131 / VPI 4355).